Consider the following 1202-residue polypeptide: Ribonuclease P protein component, mitochondrial (1202 aa).

A mitochondrion-targeting transit peptide spans methionine 1–tyrosine 122. Residues asparagine 109–aspartate 134 are disordered. The span at glutamine 118–aspartate 134 shows a compositional bias: polar residues.

In terms of assembly, consists of an RNA moiety (RPM1) and the protein component (RPM2). Both are necessary for full enzymatic activity.

It localises to the mitochondrion. It catalyses the reaction Endonucleolytic cleavage of RNA, removing 5'-extranucleotides from tRNA precursor.. Ribonuclease P generates mature tRNA molecules by cleaving their 5'-ends. This is Ribonuclease P protein component, mitochondrial (RPM2) from Saccharomyces cerevisiae (strain ATCC 204508 / S288c) (Baker's yeast).